The chain runs to 97 residues: HssA/B-like protein 48 (97 aa).

2 disordered regions span residues 1–20 (MTLF…SKSS) and 78–97 (GSGY…CCGI).

Belongs to the hssA/B family.

In Dictyostelium discoideum (Social amoeba), this protein is HssA/B-like protein 48 (hssl48).